A 424-amino-acid chain; its full sequence is Putative glutamate--cysteine ligase 2-3 (424 aa).

2 disordered regions span residues Met1–Val20 and Gly405–Pro424.

It belongs to the glutamate--cysteine ligase type 2 family. YbdK subfamily.

It catalyses the reaction L-cysteine + L-glutamate + ATP = gamma-L-glutamyl-L-cysteine + ADP + phosphate + H(+). Its function is as follows. ATP-dependent carboxylate-amine ligase which exhibits weak glutamate--cysteine ligase activity. The protein is Putative glutamate--cysteine ligase 2-3 of Paenarthrobacter aurescens (strain TC1).